Consider the following 282-residue polypeptide: 2-dehydro-3-deoxyphosphooctonate aldolase (282 aa).

Belongs to the KdsA family.

It localises to the cytoplasm. The catalysed reaction is D-arabinose 5-phosphate + phosphoenolpyruvate + H2O = 3-deoxy-alpha-D-manno-2-octulosonate-8-phosphate + phosphate. The protein operates within carbohydrate biosynthesis; 3-deoxy-D-manno-octulosonate biosynthesis; 3-deoxy-D-manno-octulosonate from D-ribulose 5-phosphate: step 2/3. It participates in bacterial outer membrane biogenesis; lipopolysaccharide biosynthesis. This chain is 2-dehydro-3-deoxyphosphooctonate aldolase, found in Bradyrhizobium diazoefficiens (strain JCM 10833 / BCRC 13528 / IAM 13628 / NBRC 14792 / USDA 110).